The chain runs to 293 residues: Mitochondrial glycine transporter (293 aa).

Solcar repeat units lie at residues 6-85 (GGVP…SRSA), 102-186 (LQSY…AKEM), and 208-291 (ASAM…LLKL). Helical transmembrane passes span 12 to 37 (LVSGFFGGLASVCALQPLDLLKTRLQ), 60 to 86 (GTLPSALRTSIGSALYLSLLNYSRSAL), 108 to 133 (LLTGALSRAAVGLVTMPITVIKVRYE), 161 to 184 (GAAATTLRDAPYAGLYVLLYEQAK), 212 to 238 (VNGVSAFLSASLATTLTAPFDTIKTRM), and 266 to 284 (GLSLRLCRKAMSACIAWGI).

The protein belongs to the mitochondrial carrier (TC 2.A.29) family. SLC25A38 subfamily.

Its subcellular location is the mitochondrion inner membrane. It carries out the reaction glycine(in) = glycine(out). Functionally, mitochondrial glycine transporter that imports glycine into the mitochondrial matrix. Plays an important role in providing glycine for the first enzymatic step in heme biosynthesis, the condensation of glycine with succinyl-CoA to produce 5-aminolevulinate (ALA) in the mitochondrial matrix. The polypeptide is Mitochondrial glycine transporter (Eremothecium gossypii (strain ATCC 10895 / CBS 109.51 / FGSC 9923 / NRRL Y-1056) (Yeast)).